The sequence spans 312 residues: MARKVEKENGSGPIKSNHDLVRGVWQLFRLHTIEGLSTASIGWLALFFYATQQQLAFDLVRNAFIGIFATYQMTHCVFCLWNDICDRDFDGKVARTRDRPLPSGMVTLTEAMWVFVLGVFASMGVTYWLLGADVTLTMVPIWVLSFIYPLCKRIIWAPQVVLGLTMALCVLPPWVAVRKNSGSAGLLPASLFGAIFCWLVYLDLIYASQDRPDDQKAGVKSLAIFLGDYLKAGLTVLGVLQVVCFVLAASEASAGFLLWVFGIAVWSASVPWSIMSLDTRDRKSGGRIFLVNAILGIYMAAVSGLNVSLAMW.

A glycan (N-linked (GlcNAc...) asparagine) is linked at Asn-9. 9 helical membrane passes run 30-50 (LHTI…FFYA), 64-84 (FIGI…WNDI), 111-131 (AMWV…WLLG), 132-152 (ADVT…PLCK), 154-174 (IIWA…LPPW), 185-205 (GLLP…LDLI), 229-249 (YLKA…VLAA), 255-275 (GFLL…WSIM), and 288-308 (IFLV…LNVS).

Belongs to the UbiA prenyltransferase family. Mg(2+) is required as a cofactor.

The protein resides in the membrane. It participates in secondary metabolite biosynthesis; terpenoid biosynthesis. In terms of biological role, polyprenyl transferase; part of the gene cluster that mediates the biosynthesis of the meroterpenoids arthripenoids. The pathway begins with the HR-PKS atnH that catalyzes two chain-extension steps to form a reduced triketide, which then primes the SAT domain in the NR-PKS atnG to initiate three more cycles of extension to give a linear hexaketide corresponding to the polyketide part of arthripenoids. The FAD-dependent monooxygenase atnJ then performs an oxidative decarboxylation at C11 of the atnH/atnG product, via an electrophilic aromatic hydroxylation with concomitant ipso-decarboxylation. The membrane-bound polyprenyl transferase atnF then introduces a farnesyl group before the FAD-dependent monooxygenase atnK functions as the first epoxidase on terminal C12'-C13' olefin, followed by a second epoxidation on C7'-C8' catalyzed by atnA. The terpene cyclase/mutase atnI then initiates the sequential tricyclic ring formation through protonation of the terminal epoxide and catalyzes the regioselective and stereoselective 6/6/6-tricyclic ring formation. The cytochrome P450 monooxygenase atnM is responsible for hydroxylating both C1' and C10'. The next steps may involve ketoreduction and acetyl transfer by the ketoreductase atnB and the acetyltransferase atnC, and lead to the production of arthripenoid B, the final biosynthetic product of the atn cluster. The hydroquinone moiety in arthripenoid B is prone to undergo spontaneous oxidation to afford a benzoquinone compound, a key intermediate for generating structure diversity. For instance, addition of a cysteine followed by ring contraction gives arthripenoid A, tautomerization gives the main product arthripenoid C, addition of a molecular of water or amine affords arthripenoid D or E, respectively, and loss of one water forms arthripenoid F. The chain is Polyprenyl transferase atnF from Arthrinium sp.